The sequence spans 247 residues: Mannose-P-dolichol utilization defect 1 protein (247 aa).

A2 bears the N-acetylalanine mark. Transmembrane regions (helical) follow at residues 37-57 (CLKI…SLLV), 74-94 (LSLQ…VYSI), 100-120 (FSSW…CFLV), 128-145 (VKGV…LVLL), 151-171 (LTVV…GRLL), 185-205 (LSAI…FTSI), and 213-233 (MAGT…QLLF). One can recognise a PQ-loop 1 domain in the interval 39 to 105 (KILLSKGLGL…NNFPFSSWGE (67 aa)). The region spanning 159–216 (ASNVPAVVVGRLLQAATNYHNGHTGQLSAITVFLLFGGSLARIFTSIQETGDPLMAGT) is the PQ-loop 2 domain.

It belongs to the MPDU1 (TC 2.A.43.3) family.

Its subcellular location is the membrane. Its function is as follows. Required for normal utilization of mannose-dolichol phosphate (Dol-P-Man) in the synthesis of N-linked and O-linked oligosaccharides and GPI anchors. In Homo sapiens (Human), this protein is Mannose-P-dolichol utilization defect 1 protein (MPDU1).